A 243-amino-acid chain; its full sequence is DNA repair protein RecO (243 aa).

It belongs to the RecO family.

Functionally, involved in DNA repair and RecF pathway recombination. This Phenylobacterium zucineum (strain HLK1) protein is DNA repair protein RecO.